Reading from the N-terminus, the 625-residue chain is Low affinity potassium transport system protein Kup (625 aa).

12 consecutive transmembrane segments (helical) span residues 15 to 35, 58 to 78, 103 to 123, 140 to 160, 171 to 191, 218 to 238, 251 to 271, 282 to 302, 340 to 360, 366 to 386, 396 to 416, and 422 to 442; these read TIFS…IYII, IIFW…IVSI, FVIV…IIII, LSFE…LFFI, IFSF…LKGI, FFVF…YINI, LFFV…IILL, FLVP…ISII, IYIP…ISIF, LILI…FFSL, FKIL…FIFI, and IICG…IMIT.

This sequence belongs to the HAK/KUP transporter (TC 2.A.72) family.

It localises to the cell membrane. It carries out the reaction K(+)(in) + H(+)(in) = K(+)(out) + H(+)(out). Functionally, responsible for the low-affinity transport of potassium into the cell. Likely operates as a K(+):H(+) symporter. This is Low affinity potassium transport system protein Kup from Wigglesworthia glossinidia brevipalpis.